The primary structure comprises 91 residues: MANTPSAKKRAKQAEKRRSHNASLRSMVRTYIKNVVKAIDAKDLEKAQAAFTAAVPVIDRMADKGIIHKNKAARHKSRLSGHIKALSTAAA.

The disordered stretch occupies residues 1–23 (MANTPSAKKRAKQAEKRRSHNAS). Residues 7–20 (AKKRAKQAEKRRSH) are compositionally biased toward basic residues.

It belongs to the bacterial ribosomal protein bS20 family.

Binds directly to 16S ribosomal RNA. The polypeptide is Small ribosomal subunit protein bS20 (Pseudomonas aeruginosa (strain LESB58)).